Reading from the N-terminus, the 489-residue chain is NADH-ubiquinone oxidoreductase chain 2 (489 aa).

A run of 13 helical transmembrane segments spans residues 9-29 (LFPEIFLINATIILLIYGVVF), 47-67 (LGLLSVLITILLVAVGSPLAV), 80-100 (FTYFCQIFLLLSTASTMVMCL), 114-134 (IVLILLSTCSMLFMISAYDLI), 168-188 (FILGAFSSGILLFGCSMIYGF), 216-236 (IFMGILFIAVGFLFKITAVPF), 248-268 (PTIVTAFFSIAPKISILANML), 280-300 (WQQLFFFCSIASMILGALAAM), 309-329 (LAYSSIGHVGYLLIGFSCGTI), 335-355 (LLIGIFIYVLMTVNVFAIVLA), 376-396 (ILAITLSITMFSYAGIPPLAG), 401-421 (FYLFFAALGCGAYLLALIGVV), and 459-479 (LAITVFFITFFFLYPSPLFLV).

This sequence belongs to the complex I subunit 2 family.

The protein localises to the mitochondrion inner membrane. It carries out the reaction a ubiquinone + NADH + 5 H(+)(in) = a ubiquinol + NAD(+) + 4 H(+)(out). Functionally, core subunit of the mitochondrial membrane respiratory chain NADH dehydrogenase (Complex I) that is believed to belong to the minimal assembly required for catalysis. Complex I functions in the transfer of electrons from NADH to the respiratory chain. The immediate electron acceptor for the enzyme is believed to be ubiquinone. The chain is NADH-ubiquinone oxidoreductase chain 2 (ND2) from Marchantia polymorpha (Common liverwort).